Here is a 658-residue protein sequence, read N- to C-terminus: D-ornithine--citrate ligase (658 aa).

The protein belongs to the IucA/IucC family.

It catalyses the reaction D-ornithine + citrate + ATP = N(5)-[(S)-citryl]-D-ornithine + AMP + diphosphate + H(+). It functions in the pathway siderophore biosynthesis. Its function is as follows. Involved in the biosynthesis of the siderophore staphyloferrin A. Catalyzes the ATP-dependent condensation of D-ornithine and citrate to form a citryl-D-ornithine intermediate. This Staphylococcus aureus (strain NCTC 8325 / PS 47) protein is D-ornithine--citrate ligase.